Here is a 333-residue protein sequence, read N- to C-terminus: Adenosine deaminase (333 aa).

Zn(2+)-binding residues include histidine 12 and histidine 14. The substrate site is built by histidine 14, aspartate 16, and glycine 170. Position 197 (histidine 197) interacts with Zn(2+). Glutamate 200 serves as the catalytic Proton donor. Aspartate 278 contributes to the Zn(2+) binding site. A substrate-binding site is contributed by aspartate 279.

It belongs to the metallo-dependent hydrolases superfamily. Adenosine and AMP deaminases family. Adenosine deaminase subfamily. Requires Zn(2+) as cofactor.

The enzyme catalyses adenosine + H2O + H(+) = inosine + NH4(+). The catalysed reaction is 2'-deoxyadenosine + H2O + H(+) = 2'-deoxyinosine + NH4(+). In terms of biological role, catalyzes the hydrolytic deamination of adenosine and 2-deoxyadenosine. The chain is Adenosine deaminase from Salmonella agona (strain SL483).